Consider the following 209-residue polypeptide: Xanthine phosphoribosyltransferase 1 (209 aa).

Position 79 is a phosphoserine (Ser-79).

The protein resides in the cytoplasm. Functionally, may act as a xanthine phosphoribosyltransferase involved in the synthesis of purine nucleotides. Such activity is however unclear in vivo. The protein is Xanthine phosphoribosyltransferase 1 (XPT1) of Saccharomyces cerevisiae (strain ATCC 204508 / S288c) (Baker's yeast).